A 769-amino-acid polypeptide reads, in one-letter code: Serine/threonine-protein kinase PLK4 (769 aa).

In terms of domain architecture, Protein kinase spans 14 to 267; the sequence is YEVQHLLGKG…LEAVLCHPFM (254 aa). Residues 20–28 and Lys-43 each bind ATP; that span reads LGKGGFATV. The active-site Proton acceptor is Asp-138. The Cryptic POLO box 1 (CPB1) domain maps to 381–498; that stretch reads EDRISVPPLN…ARFVGLVKSK (118 aa). The region spanning 499–602 is the Cryptic POLO box 2 (CPB2) domain; it reads TPKVTYFSTL…GRRPITDVQP (104 aa). Residues 660-739 enclose the POLO box domain; it reads PIKRINVPEI…IPNIQLKLKT (80 aa).

It belongs to the protein kinase superfamily. Ser/Thr protein kinase family. CDC5/Polo subfamily. As to quaternary structure, homodimer. Interacts with Alms1a. Post-translationally, ubiquitinated by the SCF-slmb ubiquitin ligase complex; leading to its degradation by the proteasome during interphase and regulating centriole number and ensuring the block to centriole reduplication. Expressed in testis (at protein level).

The protein localises to the cytoplasm. The protein resides in the cytoskeleton. It localises to the microtubule organizing center. Its subcellular location is the centrosome. It is found in the centriole. The catalysed reaction is L-seryl-[protein] + ATP = O-phospho-L-seryl-[protein] + ADP + H(+). It catalyses the reaction L-threonyl-[protein] + ATP = O-phospho-L-threonyl-[protein] + ADP + H(+). Serine/threonine-protein kinase that plays a central role in centriole duplication. Able to trigger procentriole formation on the surface of the mother centriole cylinder, using mother centriole as a platform, leading to the recruitment of centriole biogenesis proteins such as Sas-6. When overexpressed, it is able to induce centrosome amplification through the simultaneous generation of multiple procentrioles adjoining each parental centriole during S phase. Centrosome amplification following overexpression can initiate tumorigenesis, highlighting the importance of centrosome regulation in cancers. In Drosophila melanogaster (Fruit fly), this protein is Serine/threonine-protein kinase PLK4 (SAK).